Consider the following 456-residue polypeptide: Bifunctional protein GlmU (456 aa).

A pyrophosphorylase region spans residues 1–229 (MLNSAMSVVI…LSEVEGVNNR (229 aa)). UDP-N-acetyl-alpha-D-glucosamine is bound by residues 11 to 14 (LAAG), K25, Q76, 81 to 82 (GT), 103 to 105 (YGD), G140, E154, N169, and N227. D105 is a binding site for Mg(2+). N227 lines the Mg(2+) pocket. The linker stretch occupies residues 230–250 (LQLSALERIYQREQADKLLLA). Positions 251–456 (GVMLLDPARF…SGWQRPVKKK (206 aa)) are N-acetyltransferase. UDP-N-acetyl-alpha-D-glucosamine contacts are provided by R333 and K351. H363 (proton acceptor) is an active-site residue. UDP-N-acetyl-alpha-D-glucosamine is bound by residues Y366 and N377. Residues A380, 386-387 (NY), S405, A423, and R440 contribute to the acetyl-CoA site.

It in the N-terminal section; belongs to the N-acetylglucosamine-1-phosphate uridyltransferase family. This sequence in the C-terminal section; belongs to the transferase hexapeptide repeat family. Homotrimer. The cofactor is Mg(2+).

The protein resides in the cytoplasm. It carries out the reaction alpha-D-glucosamine 1-phosphate + acetyl-CoA = N-acetyl-alpha-D-glucosamine 1-phosphate + CoA + H(+). It catalyses the reaction N-acetyl-alpha-D-glucosamine 1-phosphate + UTP + H(+) = UDP-N-acetyl-alpha-D-glucosamine + diphosphate. The protein operates within nucleotide-sugar biosynthesis; UDP-N-acetyl-alpha-D-glucosamine biosynthesis; N-acetyl-alpha-D-glucosamine 1-phosphate from alpha-D-glucosamine 6-phosphate (route II): step 2/2. It functions in the pathway nucleotide-sugar biosynthesis; UDP-N-acetyl-alpha-D-glucosamine biosynthesis; UDP-N-acetyl-alpha-D-glucosamine from N-acetyl-alpha-D-glucosamine 1-phosphate: step 1/1. Its pathway is bacterial outer membrane biogenesis; LPS lipid A biosynthesis. In terms of biological role, catalyzes the last two sequential reactions in the de novo biosynthetic pathway for UDP-N-acetylglucosamine (UDP-GlcNAc). The C-terminal domain catalyzes the transfer of acetyl group from acetyl coenzyme A to glucosamine-1-phosphate (GlcN-1-P) to produce N-acetylglucosamine-1-phosphate (GlcNAc-1-P), which is converted into UDP-GlcNAc by the transfer of uridine 5-monophosphate (from uridine 5-triphosphate), a reaction catalyzed by the N-terminal domain. This chain is Bifunctional protein GlmU, found in Pectobacterium atrosepticum (strain SCRI 1043 / ATCC BAA-672) (Erwinia carotovora subsp. atroseptica).